A 36-amino-acid polypeptide reads, in one-letter code: uncharacterized protein (36 aa).

This is an uncharacterized protein from Treponema pallidum (strain Nichols).